The sequence spans 420 residues: Pectate lyase (420 aa).

Positions 1 to 21 (MKKVMLATALFLGLTPAGANA) are cleaved as a signal peptide. The tract at residues 117–139 (TWGKKEPSGTQEEARARSQKNQK) is disordered. A compositionally biased stretch (basic and acidic residues) spans 119–132 (GKKEPSGTQEEARA). D205, D244, and D248 together coordinate Ca(2+). R300 is a catalytic residue.

This sequence belongs to the polysaccharide lyase 1 family. As to quaternary structure, monomer. Ca(2+) serves as cofactor.

It localises to the secreted. It catalyses the reaction Eliminative cleavage of (1-&gt;4)-alpha-D-galacturonan to give oligosaccharides with 4-deoxy-alpha-D-galact-4-enuronosyl groups at their non-reducing ends.. The protein operates within glycan metabolism; pectin degradation; 2-dehydro-3-deoxy-D-gluconate from pectin: step 2/5. Produces unsaturated products from polygalacturonate. The protein is Pectate lyase (pel) of Bacillus subtilis (strain 168).